The sequence spans 449 residues: Probable mitochondrial chaperone bcs1 (449 aa).

The Mitochondrial intermembrane segment spans residues 1-20; the sequence is MDNIGAADAATSSGISGLLS. The chain crosses the membrane as a helical span at residues 21 to 41; it reads GNSFLGAGIGLMGFGAGLAIL. Topologically, residues 42–449 are mitochondrial matrix; it reads RRGLISGASL…FNVHRKSLSV (408 aa). 249 to 256 is a binding site for ATP; that stretch reads GPPGSGKT.

It belongs to the AAA ATPase family. BCS1 subfamily.

It localises to the mitochondrion inner membrane. It catalyses the reaction ATP + H2O = ADP + phosphate + H(+). Chaperone necessary for the incorporation of Rieske iron-sulfur protein rip1 into the mitochondrial respiratory chain complex III. This is Probable mitochondrial chaperone bcs1 from Schizosaccharomyces pombe (strain 972 / ATCC 24843) (Fission yeast).